The primary structure comprises 286 residues: Pyridoxal kinase PdxY (286 aa).

Substrate-binding positions include serine 9 and 44–45 (TQ). Aspartate 111, glutamate 148, and lysine 181 together coordinate ATP. Aspartate 222 is a binding site for substrate.

It belongs to the pyridoxine kinase family. PdxY subfamily. In terms of assembly, homodimer. Mg(2+) is required as a cofactor.

The catalysed reaction is pyridoxal + ATP = pyridoxal 5'-phosphate + ADP + H(+). The protein operates within cofactor metabolism; pyridoxal 5'-phosphate salvage; pyridoxal 5'-phosphate from pyridoxal: step 1/1. In terms of biological role, pyridoxal kinase involved in the salvage pathway of pyridoxal 5'-phosphate (PLP). Catalyzes the phosphorylation of pyridoxal to PLP. This Histophilus somni (strain 129Pt) (Haemophilus somnus) protein is Pyridoxal kinase PdxY.